A 306-amino-acid polypeptide reads, in one-letter code: GTPase Era (306 aa).

The Era-type G domain maps to 14–181 (KSGFIGIIGR…LDELWKYLPE (168 aa)). A G1 region spans residues 22 to 29 (GRPNVGKS). Residue 22–29 (GRPNVGKS) coordinates GTP. Residues 48–52 (QTTRN) are G2. The G3 stretch occupies residues 69 to 72 (DTPG). Residues 69 to 73 (DTPGI) and 131 to 134 (NKID) contribute to the GTP site. The G4 stretch occupies residues 131-134 (NKID). Positions 160–162 (ISA) are G5. The 79-residue stretch at 212 to 290 (THKEIPYSSA…FLELFVRVRK (79 aa)) folds into the KH type-2 domain.

The protein belongs to the TRAFAC class TrmE-Era-EngA-EngB-Septin-like GTPase superfamily. Era GTPase family. In terms of assembly, monomer.

Its subcellular location is the cytoplasm. It localises to the cell inner membrane. Functionally, an essential GTPase that binds both GDP and GTP, with rapid nucleotide exchange. Plays a role in 16S rRNA processing and 30S ribosomal subunit biogenesis and possibly also in cell cycle regulation and energy metabolism. The chain is GTPase Era from Syntrophus aciditrophicus (strain SB).